The chain runs to 349 residues: Putative transport protein jhp_0514 (349 aa).

The next 8 membrane-spanning stretches (helical) occupy residues 6–26, 27–47, 56–76, 143–163, 195–215, 224–244, 258–278, and 300–320; these read FFWI…QDFL, MDAL…VFLN, SFLC…FIVY, LKLV…FYYG, VLLT…TMII, LGIL…LIWI, EAIF…DSVI, and ILIF…GIIV.

The protein belongs to the autoinducer-2 exporter (AI-2E) (TC 2.A.86) family.

Its subcellular location is the cell membrane. The sequence is that of Putative transport protein jhp_0514 from Helicobacter pylori (strain J99 / ATCC 700824) (Campylobacter pylori J99).